Consider the following 354-residue polypeptide: WASH complex subunit 3 (354 aa).

Residues 76-354 (SSANVPVHNT…DDDDDDDESW (279 aa)) form a disordered region. The segment covering 107 to 143 (IPPPPPPPPPPMTGVPPPPPPPPPPPISKSNIPPPPA) has biased composition (pro residues). The segment covering 150 to 159 (ESDDDDEDNN) has biased composition (acidic residues). Positions 213-244 (PQPPQPQPQSPSPQPPPPPTTTSSIPVPPPPF) are enriched in pro residues. Residues 251–260 (SDDDDDDDEG) are compositionally biased toward acidic residues. Positions 277 to 290 (NNNSNSNSYSNNNN) are enriched in low complexity. Composition is skewed to acidic residues over residues 293 to 307 (DDDD…DDDN) and 342 to 354 (DADD…DESW).

It belongs to the CCDC53 family. Probable component of the WASH complex.

This chain is WASH complex subunit 3, found in Dictyostelium discoideum (Social amoeba).